We begin with the raw amino-acid sequence, 397 residues long: Elongation factor Tu (397 aa).

The 197-residue stretch at Lys10 to Glu206 folds into the tr-type G domain. A G1 region spans residues Gly19–Thr26. GTP is bound at residue Gly19–Thr26. Thr26 serves as a coordination point for Mg(2+). The tract at residues Gly62 to Asn66 is G2. The G3 stretch occupies residues Asp83 to Gly86. Residues Asp83 to His87 and Asn138 to Asp141 contribute to the GTP site. Residues Asn138–Asp141 are G4. The segment at Ser176–Leu178 is G5.

This sequence belongs to the TRAFAC class translation factor GTPase superfamily. Classic translation factor GTPase family. EF-Tu/EF-1A subfamily. As to quaternary structure, monomer.

Its subcellular location is the cytoplasm. It carries out the reaction GTP + H2O = GDP + phosphate + H(+). Its function is as follows. GTP hydrolase that promotes the GTP-dependent binding of aminoacyl-tRNA to the A-site of ribosomes during protein biosynthesis. The protein is Elongation factor Tu of Brevibacterium linens.